The chain runs to 820 residues: Ribosome biogenesis protein ERB1 (820 aa).

Residues methionine 1–proline 111 form a disordered region. The span at valine 9 to glutamate 19 shows a compositional bias: basic and acidic residues. The span at proline 20–valine 48 shows a compositional bias: acidic residues. The span at valine 53–glutamate 64 shows a compositional bias: basic and acidic residues. Positions asparagine 65–aspartate 110 are enriched in acidic residues. The tract at residues arginine 282 to serine 395 is required for interaction with NOP7. Residues serine 395–proline 431 form a required for interaction with YTM1 region. WD repeat units follow at residues glycine 447–arginine 486 and alanine 495–glutamate 535. The interval glycine 545–alanine 585 is disordered. Positions glycine 551–aspartate 564 are enriched in basic and acidic residues. 5 WD repeats span residues threonine 604 to proline 646, lysine 649 to lysine 687, proline 690 to lysine 729, tyrosine 733 to threonine 773, and lysine 789 to threonine 820.

Belongs to the WD repeat BOP1/ERB1 family. Component of the NOP7 complex, composed of ERB1, NOP7 and YTM1. The complex is held together by ERB1, which interacts with NOP7 via its N-terminal domain and with YTM1 via a high-affinity interaction between the seven-bladed beta-propeller domains of the 2 proteins. The NOP7 complex associates with the 66S pre-ribosome.

It is found in the nucleus. It localises to the nucleolus. The protein localises to the nucleoplasm. Its function is as follows. Component of the NOP7 complex, which is required for maturation of the 25S and 5.8S ribosomal RNAs and formation of the 60S ribosome. This chain is Ribosome biogenesis protein ERB1, found in Yarrowia lipolytica (strain CLIB 122 / E 150) (Yeast).